The primary structure comprises 494 residues: ATP synthase subunit alpha, chloroplastic (494 aa).

170-177 (GDRQTGKT) is a binding site for ATP.

It belongs to the ATPase alpha/beta chains family. As to quaternary structure, F-type ATPases have 2 components, CF(1) - the catalytic core - and CF(0) - the membrane proton channel. CF(1) has five subunits: alpha(3), beta(3), gamma(1), delta(1), epsilon(1). CF(0) has four main subunits: a, b, b' and c.

Its subcellular location is the plastid. It localises to the chloroplast thylakoid membrane. It catalyses the reaction ATP + H2O + 4 H(+)(in) = ADP + phosphate + 5 H(+)(out). In terms of biological role, produces ATP from ADP in the presence of a proton gradient across the membrane. The alpha chain is a regulatory subunit. The polypeptide is ATP synthase subunit alpha, chloroplastic (Pinus thunbergii (Japanese black pine)).